We begin with the raw amino-acid sequence, 160 residues long: Phosphopantetheine adenylyltransferase (160 aa).

Serine 9 is a substrate binding site. ATP-binding positions include 9–10 and histidine 17; that span reads SF. Lysine 41, leucine 73, and lysine 87 together coordinate substrate. ATP is bound by residues 88-90, glutamate 98, and 123-129; these read GLR and YSYLSSS.

This sequence belongs to the bacterial CoaD family. In terms of assembly, homohexamer. Requires Mg(2+) as cofactor.

It is found in the cytoplasm. It carries out the reaction (R)-4'-phosphopantetheine + ATP + H(+) = 3'-dephospho-CoA + diphosphate. The protein operates within cofactor biosynthesis; coenzyme A biosynthesis; CoA from (R)-pantothenate: step 4/5. Functionally, reversibly transfers an adenylyl group from ATP to 4'-phosphopantetheine, yielding dephospho-CoA (dPCoA) and pyrophosphate. The sequence is that of Phosphopantetheine adenylyltransferase from Clostridium tetani (strain Massachusetts / E88).